The sequence spans 143 residues: Large ribosomal subunit protein uL11 (143 aa).

The protein belongs to the universal ribosomal protein uL11 family. In terms of assembly, part of the ribosomal stalk of the 50S ribosomal subunit. Interacts with L10 and the large rRNA to form the base of the stalk. L10 forms an elongated spine to which L12 dimers bind in a sequential fashion forming a multimeric L10(L12)X complex. In terms of processing, one or more lysine residues are methylated.

Its function is as follows. Forms part of the ribosomal stalk which helps the ribosome interact with GTP-bound translation factors. This Halorhodospira halophila (strain DSM 244 / SL1) (Ectothiorhodospira halophila (strain DSM 244 / SL1)) protein is Large ribosomal subunit protein uL11.